The sequence spans 100 residues: Small ribosomal subunit protein uS14c (100 aa).

The protein belongs to the universal ribosomal protein uS14 family. As to quaternary structure, part of the 30S ribosomal subunit.

The protein resides in the plastid. The protein localises to the chloroplast. Functionally, binds 16S rRNA, required for the assembly of 30S particles. This Cryptomeria japonica (Japanese cedar) protein is Small ribosomal subunit protein uS14c.